The sequence spans 486 residues: Mogroside I-E synthase (486 aa).

UDP-alpha-D-glucose contacts are provided by serine 302, cysteine 360, glutamine 362, tryptophan 380, asparagine 381, serine 382, glutamate 385, aspartate 401, and glutamine 402.

This sequence belongs to the UDP-glycosyltransferase family. In terms of tissue distribution, highly expressed in young fruits 15 days after anthesis (15-DAA).

The enzyme catalyses mogrol + UDP-alpha-D-glucose = mogroside IE + UDP + H(+). It catalyses the reaction mogroside I-A1 + UDP-alpha-D-glucose = mogroside IIE + UDP + H(+). The catalysed reaction is mogroside II-A1 + UDP-alpha-D-glucose = mogroside IIIX + UDP + H(+). It carries out the reaction mogroside II-A + UDP-alpha-D-glucose = mogroside III + UDP + H(+). Its pathway is secondary metabolite biosynthesis; terpenoid biosynthesis. UDP-glycosyltransferase involved in the biosynthesis of cucurbitacin and mogroside tetracyclic triterpene natural products (e.g. siamenoside I and mogrosides IV, V and VI). Cucurbitacins have cytotoxic properties and exhibit deterrent taste as a defense barrier against herbivores. Mogrosides are nonsugar highly oxygenated compounds used as high-intensity zero-calorie sweeteners; they also possess pharmacological properties such as regulating immunity, lowering blood sugar and lipid levels, protecting the liver, and acting as antioxidants and antitumor agents. Catalyzes the C3 primary glucosylation of mogrol, mogroside I-A1, mogroside II-A1 and mogroside II-A. In Siraitia grosvenorii (Monk's fruit), this protein is Mogroside I-E synthase.